Consider the following 331-residue polypeptide: MKVYAAPFEKFVNLADARLGTKILSVTDDWFADANRLFQPTPAVWKEGVFDDNGKWMDGWESRRKRFEGYDSAVIKLGVAGTLKGVDIDTSFFTGNFPPSASLEACFLASGEPDENTAWTEVLSSVELKGNSHHYHEISHDQAFSHLRFNIYPDGGVARLRVYGVPHRDWSKVTESEQIDLVAALNGGRSIACSDEHYGSMSNILNPGRGVNMGDGWETARRRTPGNDWVIVALGHKGEVEKVIVDTLHFKGNYPDSCSIQGAFVKGGTDSQIETQSLFWRELLPSQKLTMHAEHEFAEQVKAIGPITHIRLNVFPDGGVSRLRVLGKVSR.

Belongs to the allantoicase family.

The enzyme catalyses allantoate + H2O = (S)-ureidoglycolate + urea. Its pathway is nitrogen metabolism; (S)-allantoin degradation; (S)-ureidoglycolate from allantoate (aminidohydrolase route): step 1/1. In Pseudomonas syringae pv. tomato (strain ATCC BAA-871 / DC3000), this protein is Probable allantoicase.